Here is a 149-residue protein sequence, read N- to C-terminus: Large ribosomal subunit protein uL13 (149 aa).

This sequence belongs to the universal ribosomal protein uL13 family. As to quaternary structure, part of the 50S ribosomal subunit.

In terms of biological role, this protein is one of the early assembly proteins of the 50S ribosomal subunit, although it is not seen to bind rRNA by itself. It is important during the early stages of 50S assembly. The chain is Large ribosomal subunit protein uL13 from Bifidobacterium longum subsp. infantis (strain ATCC 15697 / DSM 20088 / JCM 1222 / NCTC 11817 / S12).